Reading from the N-terminus, the 294-residue chain is 4-hydroxy-tetrahydrodipicolinate synthase (294 aa).

Threonine 47 contributes to the pyruvate binding site. The active-site Proton donor/acceptor is tyrosine 135. The active-site Schiff-base intermediate with substrate is the lysine 163. Valine 205 contacts pyruvate.

This sequence belongs to the DapA family. As to quaternary structure, homotetramer; dimer of dimers.

Its subcellular location is the cytoplasm. It carries out the reaction L-aspartate 4-semialdehyde + pyruvate = (2S,4S)-4-hydroxy-2,3,4,5-tetrahydrodipicolinate + H2O + H(+). The protein operates within amino-acid biosynthesis; L-lysine biosynthesis via DAP pathway; (S)-tetrahydrodipicolinate from L-aspartate: step 3/4. Functionally, catalyzes the condensation of (S)-aspartate-beta-semialdehyde [(S)-ASA] and pyruvate to 4-hydroxy-tetrahydrodipicolinate (HTPA). This chain is 4-hydroxy-tetrahydrodipicolinate synthase, found in Rickettsia bellii (strain RML369-C).